The following is a 263-amino-acid chain: Indole-3-glycerol phosphate synthase (263 aa).

The protein belongs to the TrpC family.

The catalysed reaction is 1-(2-carboxyphenylamino)-1-deoxy-D-ribulose 5-phosphate + H(+) = (1S,2R)-1-C-(indol-3-yl)glycerol 3-phosphate + CO2 + H2O. The protein operates within amino-acid biosynthesis; L-tryptophan biosynthesis; L-tryptophan from chorismate: step 4/5. The sequence is that of Indole-3-glycerol phosphate synthase from Acidithiobacillus ferrooxidans (strain ATCC 23270 / DSM 14882 / CIP 104768 / NCIMB 8455) (Ferrobacillus ferrooxidans (strain ATCC 23270)).